Reading from the N-terminus, the 473-residue chain is Lactate utilization protein B (473 aa).

4Fe-4S ferredoxin-type domains lie at 302 to 332 and 351 to 380; these read GSEFRQVLQCIRCAACVNVCPVYRHVGGHSY and YNDYKELPYASSLCGACTEACPVKIPLHDL. The [4Fe-4S] cluster site is built by C311, C314, C317, C321, C364, C367, and C371.

Belongs to the LutB/YkgF family.

Functionally, is involved in L-lactate degradation and allows cells to grow with lactate as the sole carbon source. Has probably a role as an electron transporter during oxidation of L-lactate. This chain is Lactate utilization protein B, found in Bacillus cereus (strain AH820).